A 3579-amino-acid chain; its full sequence is Protocadherin-like wing polarity protein stan (3579 aa).

Residues 1–29 form the signal peptide; the sequence is MQTREFPQRPLGLLLVLLVVLLQSSLIKS. Residues 30 to 2816 lie on the Extracellular side of the membrane; that stretch reads YLIIVHEDTP…EPSLLVQITS (2787 aa). Asparagine 46, asparagine 179, and asparagine 340 each carry an N-linked (GlcNAc...) asparagine glycan. Cadherin domains lie at 360–464, 465–581, 582–689, 690–794, 795–897, 898–1007, 1008–1113, and 1114–1220; these read EQAL…SPTF, EAEQ…YPQF, SERT…APRF, YTSQ…DPAF, NPKY…APIF, ENAP…APAF, KSPL…PPTF, and ASDK…APVL. Asparagine 671 carries N-linked (GlcNAc...) asparagine glycosylation. Asparagine 886 is a glycosylation site (N-linked (GlcNAc...) asparagine). Asparagine 1269, asparagine 1374, and asparagine 1441 each carry an N-linked (GlcNAc...) asparagine glycan. Residues 1482-1518 enclose the EGF-like 1; calcium-binding domain; the sequence is EVDLCYSDPCQNGGTCVRREGGYTCVCPSTHTGQNCE. 3 disulfides stabilise this stretch: cysteine 1486/cysteine 1497, cysteine 1491/cysteine 1506, and cysteine 1508/cysteine 1517. Residues 1556-1753 form the Laminin G-like 1 domain; it reads LRARAFGRNS…VADNGTLAGC (198 aa). Residues asparagine 1650, asparagine 1678, and asparagine 1747 are each glycosylated (N-linked (GlcNAc...) asparagine). Disulfide bonds link cysteine 1727-cysteine 1753, cysteine 1760-cysteine 1771, cysteine 1765-cysteine 1780, and cysteine 1782-cysteine 1791. An EGF-like 2; calcium-binding domain is found at 1756–1792; the sequence is KAPLCQSEPCFNGGTCREGWGTYSCECPEGYAGNSCQ. The 168-residue stretch at 1796 to 1963 folds into the Laminin G-like 2 domain; sequence PAPWRFSGDG…TIRENVEDGC (168 aa). Residue asparagine 1843 is glycosylated (N-linked (GlcNAc...) asparagine). 4 disulfides stabilise this stretch: cysteine 1937/cysteine 1963, cysteine 1969/cysteine 1979, cysteine 1973/cysteine 1988, and cysteine 1990/cysteine 1999. Residues 1965–2000 form the EGF-like 3; calcium-binding domain; sequence SRAQCPDHCPNHSSCQSSWDLSTCECDSGYVGTDCA. N-linked (GlcNAc...) asparagine glycosylation occurs at asparagine 1975. 4 N-linked (GlcNAc...) asparagine glycosylation sites follow: asparagine 2016, asparagine 2028, asparagine 2071, and asparagine 2088. 4 cysteine pairs are disulfide-bonded: cysteine 2092–cysteine 2095, cysteine 2097–cysteine 2114, cysteine 2116–cysteine 2125, and cysteine 2128–cysteine 2140. Residues 2095-2142 enclose the Laminin EGF-like domain; sequence CDCYSIGSFSGACNPLTGQCECREGVIGRRCDSCSNPYAEVTLSGCEV. 2 N-linked (GlcNAc...) asparagine glycosylation sites follow: asparagine 2196 and asparagine 2320. Residues 2553 to 2562 are compositionally biased toward basic and acidic residues; that stretch reads QETQRLEIPS. Disordered regions lie at residues 2553–2582, 2610–2635, and 2654–2684; these read QETQ…STEQ, HEIP…EREP, and VISP…GENE. A compositionally biased stretch (low complexity) spans 2567-2579; sequence SSSSPSSSSSSGS. One can recognise a GAIN-B domain in the interval 2653–2803; that stretch reads EVISPDSPEM…AVIVDVIDPE (151 aa). 2 disulfide bridges follow: cysteine 2747–cysteine 2785 and cysteine 2762–cysteine 2787. The tract at residues 2747 to 2803 is GPS; sequence CVRWNSFTNQWTRLGCQTEIPDFDGDFNPAAQQAILVNCSCTHISSYAVIVDVIDPE. An N-linked (GlcNAc...) asparagine glycan is attached at asparagine 2784. Residues 2817–2837 form a helical membrane-spanning segment; the sequence is YSAFLVSLPLLLGVLLALALL. Topologically, residues 2838 to 2845 are cytoplasmic; the sequence is RGQQTNSN. Residues 2846–2866 traverse the membrane as a helical segment; it reads TIHQNIVLCVFCAELLFFVGM. Residues 2867–2883 are Extracellular-facing; sequence QSRRQLLESEFPCKLTA. Residues 2884–2904 form a helical membrane-spanning segment; the sequence is ICLHYFWLAAFAWTTVDCVHL. Residues 2905–2919 lie on the Cytoplasmic side of the membrane; that stretch reads YRMLTEMRDINHGPM. Residues 2920 to 2940 traverse the membrane as a helical segment; the sequence is GFYFAMGYGAPAIVVGLSVGV. The Extracellular portion of the chain corresponds to 2941-2959; the sequence is RAHEYGNSLFCWLSVYEPV. The helical transmembrane segment at 2960 to 2980 threads the bilayer; the sequence is VWWLVGPIAGMSVVNLLILFV. Topologically, residues 2981 to 3000 are cytoplasmic; that stretch reads SVKAAFTLKDHVLGFGNLRT. The helical transmembrane segment at 3001–3021 threads the bilayer; that stretch reads LLWLSVVSLPLMGVMWVLAVL. The Extracellular portion of the chain corresponds to 3022–3031; it reads AASEHSQLLS. Residues 3032 to 3052 form a helical membrane-spanning segment; the sequence is LLLSGVVLLHALFCLIGYCII. Topologically, residues 3053–3579 are cytoplasmic; the sequence is NKRVRENLQR…RNIDDDETTV (527 aa). Disordered stretches follow at residues 3111-3225, 3343-3377, 3458-3486, and 3499-3579; these read GISA…TPAY, LYGR…SGSQ, YHQQ…YHFP, and LSHT…ETTV. Residues 3113–3128 are compositionally biased toward low complexity; that stretch reads SASSTTSRSTAKTSSS. Over residues 3167 to 3191 the composition is skewed to basic and acidic residues; sequence RGGEEKPSRRQRKDSDSGSETDGRS. A phosphoserine mark is found at serine 3199 and serine 3200. The segment covering 3208–3223 has biased composition (polar residues); that stretch reads ARSSGTHRSTAVSSTP. A compositionally biased stretch (basic and acidic residues) spans 3343-3352; that stretch reads LYGRRGEYPD. Low complexity predominate over residues 3459–3468; that stretch reads HQQQQQQQQH. Over residues 3469 to 3482 the composition is skewed to basic and acidic residues; sequence HLQDRLSEGSDKNG. A compositionally biased stretch (polar residues) spans 3501–3513; it reads HTQPPSLHGSQLM.

It belongs to the G-protein coupled receptor 2 family. In terms of assembly, interacts with ATP6AP2 (via N-terminus). In the pupal wing, expressed at relatively even levels in all regions. Abundant in 6-9 hours embryos. Expressed at higher levels in pupae than larvae.

The protein localises to the cell membrane. It localises to the apical cell membrane. In terms of biological role, involved in the fz signaling pathway that controls wing tissue polarity. Also mediates homophilic cell adhesion. May play a role in initiating prehair morphogenesis. May play a critical role in tissue polarity and in formation of normal dendrite fields. During planar cell polarity, stabilizes asymmetric PCP domains together with ATP6AP2. This chain is Protocadherin-like wing polarity protein stan (stan), found in Drosophila melanogaster (Fruit fly).